The following is a 343-amino-acid chain: Probable fructokinase-7 (343 aa).

Position 2 is an N-acetylglycine (G2).

Belongs to the carbohydrate kinase PfkB family.

It catalyses the reaction D-fructose + ATP = D-fructose 6-phosphate + ADP + H(+). It participates in glycan biosynthesis; starch biosynthesis. Its function is as follows. May play an important role in maintaining the flux of carbon towards starch formation. In Arabidopsis thaliana (Mouse-ear cress), this protein is Probable fructokinase-7.